The following is a 78-amino-acid chain: Large ribosomal subunit protein bL28 (78 aa).

Belongs to the bacterial ribosomal protein bL28 family.

The protein is Large ribosomal subunit protein bL28 of Prochlorococcus marinus (strain MIT 9215).